Consider the following 140-residue polypeptide: MEQPTSSTNGEKTKSPCKSNSENDEMQEVPNRVLAPEQSLKKTKTSEYPIIFVYYRRKGKKINSNQLENDQSQENSINPVQKEEDEGLGLSEGSSNEDEDLGPSEGPSKEDKDLDSSEGSSQENEDLGLSEGSSQDSGED.

Composition is skewed to polar residues over residues 1–20 (MEQP…CKSN), 62–79 (INSN…SINP), and 131–140 (EGSSQDSGED). The disordered stretch occupies residues 1–140 (MEQPTSSTNG…EGSSQDSGED (140 aa)).

The protein belongs to the SPAN-X family.

This chain is Sperm protein associated with the nucleus on the X chromosome N3 (SPANXN3), found in Pan troglodytes (Chimpanzee).